The following is a 184-amino-acid chain: Casparian strip membrane protein 3 (184 aa).

Residues 1–22 (MEGSGEHGETSKGPLSKGVSRG) are Cytoplasmic-facing. Residues 23–43 (LCILDLIFRVIAVIGTLASAI) form a helical membrane-spanning segment. Residues 44–72 (AMGTTNQTMPFFTQFVQFKERYSDLPTLT) are Extracellular-facing. Asparagine 49 carries N-linked (GlcNAc...) asparagine glycosylation. A helical membrane pass occupies residues 73 to 93 (FFVVANSIASAYLIISLPLSI). Topologically, residues 94–105 (VHIIRSRAKYSR) are cytoplasmic. Residues 106–126 (LILIFFDVAMLALVTAAASAG) traverse the membrane as a helical segment. The Extracellular segment spans residues 127–159 (AAIVYLAHNGNVSANWFAICQQFDSFCERISGS). Asparagine 137 carries an N-linked (GlcNAc...) asparagine glycan. Residues 160–180 (LIGSFAAMVVLILLILLSAVA) form a helical membrane-spanning segment. Topologically, residues 181 to 184 (LARR) are cytoplasmic.

The protein belongs to the Casparian strip membrane proteins (CASP) family. Homodimer and heterodimers.

It localises to the cell membrane. Functionally, regulates membrane-cell wall junctions and localized cell wall deposition. Required for establishment of the Casparian strip membrane domain (CSD) and the subsequent formation of Casparian strips, a cell wall modification of the root endodermis that determines an apoplastic barrier between the intraorganismal apoplasm and the extraorganismal apoplasm and prevents lateral diffusion. The polypeptide is Casparian strip membrane protein 3 (Brachypodium distachyon (Purple false brome)).